The primary structure comprises 211 residues: LexA repressor (211 aa).

The H-T-H motif DNA-binding region spans 28–48; it reads VREVGEAVGLSSSSTIHGHIE. Active-site for autocatalytic cleavage activity residues include S132 and K170.

This sequence belongs to the peptidase S24 family. Homodimer.

The catalysed reaction is Hydrolysis of Ala-|-Gly bond in repressor LexA.. Its function is as follows. Represses a number of genes involved in the response to DNA damage (SOS response), including recA and lexA. In the presence of single-stranded DNA, RecA interacts with LexA causing an autocatalytic cleavage which disrupts the DNA-binding part of LexA, leading to derepression of the SOS regulon and eventually DNA repair. This chain is LexA repressor, found in Leuconostoc citreum (strain KM20).